Here is a 353-residue protein sequence, read N- to C-terminus: C2 calcium-dependent domain-containing protein 4D (353 aa).

The disordered stretch occupies residues 135-191 (CRAPDSDTASSPDSSPFGSPRPGLGRRRVSRPHSLSPEKASSADTSPHSPRRAGPPT). The span at 140-150 (SDTASSPDSSP) shows a compositional bias: low complexity. In terms of domain architecture, C2 spans 217-343 (RGGQLRLSTE…PPLGGGLGPG (127 aa)).

The sequence is that of C2 calcium-dependent domain-containing protein 4D (C2CD4D) from Homo sapiens (Human).